We begin with the raw amino-acid sequence, 451 residues long: MNTNKILETIKMIEEEKLDIRTITMGISLLDCIDSDGEKARMKIYDKITKSAEHLVEVGRQIESEYGIPIVNKRVSVTPISIIAGATNEDSYVKFAQTLDKAADTLGIDFLGGFSALVQKGCTKGDKILISSIPEALAITQKVCASVNVGCTKSGINMNAVRDMGEIIKKTAELTKDKKGFGCAKLVVFANAVEDNPFMAGAFHGVGEAEKIINVGVSGPGVVKRALEKVRGQSFDIVAETIKKTAFKITRMGELVANEASRRLDVPFGIVDLSLAPTPAVGDSVAEILEEIGLERVGTHGTIAALAMLNDAVKKGGVMACSHVGGLSGAFIPVSEDAGMIEAVINGSLNLEKLEGMTCVCSVGLDMIAIPGDTPASTISAMIADEAAIGVINNKTTAVRIIPAPGCKVGDMVEFGGLLGTAPVMKINENSSELFAQRGGRIPAPIHSFKN.

This sequence belongs to the UPF0210 family. As to quaternary structure, homodimer.

The sequence is that of UPF0210 protein CLH_1879 from Clostridium botulinum (strain Alaska E43 / Type E3).